A 199-amino-acid polypeptide reads, in one-letter code: Holliday junction branch migration complex subunit RuvA (199 aa).

Residues 1-64 (MIAKLTGRLD…EDFLRLLGFA (64 aa)) form a domain I region. The domain II stretch occupies residues 65–143 (RAEERDWFRL…ALGGISGSGP (79 aa)). The flexible linker stretch occupies residues 144–146 (ALS). The domain III stretch occupies residues 147-199 (AAAGPVGDAIAALTGLGFKPGEASAAVAAANEELGADASLDALVRVALKKAAK).

The protein belongs to the RuvA family. As to quaternary structure, homotetramer. Forms an RuvA(8)-RuvB(12)-Holliday junction (HJ) complex. HJ DNA is sandwiched between 2 RuvA tetramers; dsDNA enters through RuvA and exits via RuvB. An RuvB hexamer assembles on each DNA strand where it exits the tetramer. Each RuvB hexamer is contacted by two RuvA subunits (via domain III) on 2 adjacent RuvB subunits; this complex drives branch migration. In the full resolvosome a probable DNA-RuvA(4)-RuvB(12)-RuvC(2) complex forms which resolves the HJ.

Its subcellular location is the cytoplasm. In terms of biological role, the RuvA-RuvB-RuvC complex processes Holliday junction (HJ) DNA during genetic recombination and DNA repair, while the RuvA-RuvB complex plays an important role in the rescue of blocked DNA replication forks via replication fork reversal (RFR). RuvA specifically binds to HJ cruciform DNA, conferring on it an open structure. The RuvB hexamer acts as an ATP-dependent pump, pulling dsDNA into and through the RuvAB complex. HJ branch migration allows RuvC to scan DNA until it finds its consensus sequence, where it cleaves and resolves the cruciform DNA. The chain is Holliday junction branch migration complex subunit RuvA from Sphingopyxis alaskensis (strain DSM 13593 / LMG 18877 / RB2256) (Sphingomonas alaskensis).